The primary structure comprises 136 residues: MSLTLRVLAPDKSVFDDTVEEVILPSTTGLLGILPGHISMVTAIDIGVLKLRSSNGNWDSIALMGGFAEVESDDVTVLVNAAELGKSIDKATAEKEFEQAKAALNKLEDQAGNSADKLKAKESLNKARARSQAVGE.

Positions 112–136 (GNSADKLKAKESLNKARARSQAVGE) are disordered. Over residues 116 to 125 (DKLKAKESLN) the composition is skewed to basic and acidic residues.

This sequence belongs to the ATPase epsilon chain family. F-type ATPases have 2 components, CF(1) - the catalytic core - and CF(0) - the membrane proton channel. CF(1) has five subunits: alpha(3), beta(3), gamma(1), delta(1), epsilon(1). CF(0) has three main subunits: a, b and c.

The protein localises to the cellular thylakoid membrane. Produces ATP from ADP in the presence of a proton gradient across the membrane. This is ATP synthase epsilon chain from Prochlorococcus marinus (strain SARG / CCMP1375 / SS120).